A 337-amino-acid polypeptide reads, in one-letter code: 2-oxoglutarate receptor 1 (337 aa).

The Extracellular segment spans residues 1 to 38; the sequence is MIEPLDSPASDSDFLDYPSALGNCTDEQISFKMQYLPV. A glycan (N-linked (GlcNAc...) asparagine) is linked at N23. The helical transmembrane segment at 39–59 threads the bilayer; sequence IYSIIFLVGFPGNTVAISIYI. Topologically, residues 60-69 are cytoplasmic; that stretch reads FKMRPWRGST. A helical membrane pass occupies residues 70–90; it reads VIMLNLALTDLLYLTSLPFLI. Over 91–116 the chain is Extracellular; the sequence is HYYASGENWIFGDFMCKFIRFGFHFN. C106 and C183 are joined by a disulfide. The chain crosses the membrane as a helical span at residues 117 to 137; the sequence is LYSSILFLTCFSLFRYVVIIH. The Cytoplasmic segment spans residues 138–151; the sequence is PMSCFSIQKTRWAV. The chain crosses the membrane as a helical span at residues 152 to 172; sequence VACAGVWVISLVAVMPMTFLI. The Extracellular portion of the chain corresponds to 173-200; the sequence is TSTTRTNRSACLDLTSSDDLTTIKWYNL. Residues 201–221 traverse the membrane as a helical segment; the sequence is ILTATTFCLPLVIVTLCYTTI. Residues 222–242 lie on the Cytoplasmic side of the membrane; it reads ISTLTHGPRTHSCFKQKARRL. The chain crosses the membrane as a helical span at residues 243–263; sequence TILLLLVFYICFLPFHILRVI. The Extracellular segment spans residues 264 to 284; it reads RIESRLLSISCSIESHIHEAY. Residues 285–305 form a helical membrane-spanning segment; it reads IVSRPLAALNTFGNLLLYVVV. The Cytoplasmic segment spans residues 306–337; it reads SNNFQQAFCSIVRCKASGDLEQGKKDSCSNNP.

The protein belongs to the G-protein coupled receptor 1 family. As to expression, predominantly expressed in the kidney with limited expression in the testis and the smooth muscle. Expressed in SLC26A4/pendrin-positive type B and non-A non-B intercalated cells (at protein level).

The protein localises to the cell membrane. Its function is as follows. G protein-coupled receptor for dicarboxylates and amino dicarboxylates. Receptor for itaconate produced by activated macrophages upon bacterial infection. In the respiratory epithelium, couples the binding of itaconate to the activation of GNA11 and downstream intracellular Ca(2+) release, leading to mucocilliary clearance of airborne pathogens. Receptor for leukotriene E4 (LTE4) produced by mast cells upon allergic inflammation. Binds with high affinity to LTE4 and elicits mucin release from pulmonary epithelium in response to airborne fungi allergens. Regulates mucin-producing goblet cell homeostasis. Receptor for alpha-ketoglutarate produced by proximal tubule renal cells upon metabolic alkalosis. In an intrarenal paracrine signaling pathway, binds alpha-ketoglutarate and drives transepithelial salt reabsorption and bicarbonate secretion by SLC26A4/pendrin-positive intercalated cells. In Mus musculus (Mouse), this protein is 2-oxoglutarate receptor 1 (Oxgr1).